The chain runs to 171 residues: Nudix hydrolase DR_0079 (171 aa).

The 131-residue stretch at 32 to 162 folds into the Nudix hydrolase domain; that stretch reads ERVRVVNAFL…EAAKGDLAEL (131 aa). The Nudix box signature appears at 69 to 91; sequence GGAVQSGETYEEAFRREAREELN. Mg(2+)-binding residues include Glu-85 and Glu-89.

It belongs to the Nudix hydrolase family. In terms of assembly, monomer. Requires Mg(2+) as cofactor.

Its activity is regulated as follows. Inhibited by zinc, calcium or copper ions. Functionally, hydrolase that converts various nucleotide triphosphates (NTPs) to the corresponding nucleotide monophosphates and diphosphate, and nucleotide diphosphates to nucleotide monophosphates and inorganic phosphate. Has a marked preference for cytosine ribonucleoside 5'-diphosphate (CDP) and cytosine ribonucleoside 5'-triphosphate (CTP). Has lower activity towards the deoxyribose nucleotides dCDP and dCTP, and towards dGDP, TDP and UDP. This chain is Nudix hydrolase DR_0079, found in Deinococcus radiodurans (strain ATCC 13939 / DSM 20539 / JCM 16871 / CCUG 27074 / LMG 4051 / NBRC 15346 / NCIMB 9279 / VKM B-1422 / R1).